The following is a 330-amino-acid chain: Beta-ketoacyl-[acyl-carrier-protein] synthase III 2 (330 aa).

Residues cysteine 118 and histidine 246 contribute to the active site. An ACP-binding region spans residues 247–251 (QANLR). Residue asparagine 276 is part of the active site.

It belongs to the thiolase-like superfamily. FabH family. As to quaternary structure, homodimer.

It localises to the cytoplasm. The catalysed reaction is malonyl-[ACP] + acetyl-CoA + H(+) = 3-oxobutanoyl-[ACP] + CO2 + CoA. The protein operates within lipid metabolism; fatty acid biosynthesis. Catalyzes the condensation reaction of fatty acid synthesis by the addition to an acyl acceptor of two carbons from malonyl-ACP. Catalyzes the first condensation reaction which initiates fatty acid synthesis and may therefore play a role in governing the total rate of fatty acid production. Possesses both acetoacetyl-ACP synthase and acetyl transacylase activities. Its substrate specificity determines the biosynthesis of branched-chain and/or straight-chain of fatty acids. The protein is Beta-ketoacyl-[acyl-carrier-protein] synthase III 2 of Streptomyces coelicolor (strain ATCC BAA-471 / A3(2) / M145).